The sequence spans 201 residues: Small ribosomal subunit protein uS4c (201 aa).

Positions 89 to 157 constitute an S4 RNA-binding domain; the sequence is MRLDNILFRL…VQNYIASSDP (69 aa).

Belongs to the universal ribosomal protein uS4 family. Part of the 30S ribosomal subunit. Contacts protein S5. The interaction surface between S4 and S5 is involved in control of translational fidelity.

It localises to the plastid. The protein resides in the chloroplast. In terms of biological role, one of the primary rRNA binding proteins, it binds directly to 16S rRNA where it nucleates assembly of the body of the 30S subunit. Its function is as follows. With S5 and S12 plays an important role in translational accuracy. This Hordeum vulgare (Barley) protein is Small ribosomal subunit protein uS4c (rps4).